The sequence spans 1058 residues: Carbamoyl phosphate synthase large chain (1058 aa).

Residues 1–399 (MPIDKDIKKV…AIQKAIRSLD (399 aa)) are carboxyphosphate synthetic domain. ATP-binding residues include arginine 127, arginine 167, glycine 173, glycine 174, glutamate 206, valine 208, glutamate 213, glycine 239, isoleucine 240, histidine 241, glutamine 282, and glutamate 296. The ATP-grasp 1 domain occupies 131-325 (GHFMDKLNEP…IAKISSKIAL (195 aa)). Mg(2+)-binding residues include glutamine 282, glutamate 296, and asparagine 298. 3 residues coordinate Mn(2+): glutamine 282, glutamate 296, and asparagine 298. The tract at residues 400–538 (MGHDGFEYVE…YSTYDSGNEL (139 aa)) is oligomerization domain. Residues 539-924 (KSSNKKKIVI…YKSQLAAGMD (386 aa)) are carbamoyl phosphate synthetic domain. An ATP-grasp 2 domain is found at 663–856 (AKLLNKLHIH…LAKVATWIMT (194 aa)). ATP is bound by residues arginine 699, lysine 738, leucine 740, glutamate 745, glycine 770, valine 771, histidine 772, serine 773, glutamine 813, and glutamate 827. Positions 813, 827, and 829 each coordinate Mg(2+). Glutamine 813, glutamate 827, and asparagine 829 together coordinate Mn(2+). The MGS-like domain occupies 923 to 1058 (MDLPKEGKIF…KSLNEHIDGE (136 aa)). An allosteric domain region spans residues 925–1058 (LPKEGKIFIS…KSLNEHIDGE (134 aa)).

This sequence belongs to the CarB family. Composed of two chains; the small (or glutamine) chain promotes the hydrolysis of glutamine to ammonia, which is used by the large (or ammonia) chain to synthesize carbamoyl phosphate. Tetramer of heterodimers (alpha,beta)4. Mg(2+) serves as cofactor. It depends on Mn(2+) as a cofactor.

The catalysed reaction is hydrogencarbonate + L-glutamine + 2 ATP + H2O = carbamoyl phosphate + L-glutamate + 2 ADP + phosphate + 2 H(+). The enzyme catalyses hydrogencarbonate + NH4(+) + 2 ATP = carbamoyl phosphate + 2 ADP + phosphate + 2 H(+). It participates in amino-acid biosynthesis; L-arginine biosynthesis; carbamoyl phosphate from bicarbonate: step 1/1. Its pathway is pyrimidine metabolism; UMP biosynthesis via de novo pathway; (S)-dihydroorotate from bicarbonate: step 1/3. Large subunit of the glutamine-dependent carbamoyl phosphate synthetase (CPSase). CPSase catalyzes the formation of carbamoyl phosphate from the ammonia moiety of glutamine, carbonate, and phosphate donated by ATP, constituting the first step of 2 biosynthetic pathways, one leading to arginine and/or urea and the other to pyrimidine nucleotides. The large subunit (synthetase) binds the substrates ammonia (free or transferred from glutamine from the small subunit), hydrogencarbonate and ATP and carries out an ATP-coupled ligase reaction, activating hydrogencarbonate by forming carboxy phosphate which reacts with ammonia to form carbamoyl phosphate. The protein is Carbamoyl phosphate synthase large chain of Methanobrevibacter smithii (strain ATCC 35061 / DSM 861 / OCM 144 / PS).